The sequence spans 278 residues: 3-methyl-2-oxobutanoate hydroxymethyltransferase (278 aa).

2 residues coordinate Mg(2+): aspartate 49 and aspartate 88. Residues 49–50, aspartate 88, and lysine 118 each bind 3-methyl-2-oxobutanoate; that span reads DS. Residue glutamate 120 participates in Mg(2+) binding. Glutamate 186 functions as the Proton acceptor in the catalytic mechanism.

It belongs to the PanB family. In terms of assembly, homodecamer; pentamer of dimers. Mg(2+) serves as cofactor.

The protein resides in the cytoplasm. It carries out the reaction 3-methyl-2-oxobutanoate + (6R)-5,10-methylene-5,6,7,8-tetrahydrofolate + H2O = 2-dehydropantoate + (6S)-5,6,7,8-tetrahydrofolate. It participates in cofactor biosynthesis; (R)-pantothenate biosynthesis; (R)-pantoate from 3-methyl-2-oxobutanoate: step 1/2. In terms of biological role, catalyzes the reversible reaction in which hydroxymethyl group from 5,10-methylenetetrahydrofolate is transferred onto alpha-ketoisovalerate to form ketopantoate. This chain is 3-methyl-2-oxobutanoate hydroxymethyltransferase, found in Bordetella parapertussis (strain 12822 / ATCC BAA-587 / NCTC 13253).